Reading from the N-terminus, the 578-residue chain is Putative diflavin flavoprotein A 2 (578 aa).

Residues Q39–H233 are zinc metallo-hydrolase. One can recognise a Flavodoxin-like domain in the interval V262–K404. Positions V429–S578 are flavodoxin-reductase-like.

It in the N-terminal section; belongs to the zinc metallo-hydrolase group 3 family. The protein in the C-terminal section; belongs to the flavodoxin reductase family. The cofactor is Fe cation.

Its function is as follows. Mediates electron transfer from NADH to oxygen, reducing it to water. This modular protein has 3 redox cofactors, in other organisms the same activity requires 2 or 3 proteins. The protein is Putative diflavin flavoprotein A 2 (dfa2) of Thermosynechococcus vestitus (strain NIES-2133 / IAM M-273 / BP-1).